The following is an 80-amino-acid chain: Protein KorB (80 aa).

2 consecutive DNA-binding regions (H-T-H motif) follow at residues 13 to 32 and 56 to 75; these read AEAALKPLGQQRINVLAELD and NEVTAVAPNTARAWAKAEAE.

Its function is as follows. Repressor for the transcription of certain pIJ101 promoters, including those the from kilA and kilB loci. The polypeptide is Protein KorB (korB) (Streptomyces lividans).